A 634-amino-acid polypeptide reads, in one-letter code: Threonine--tRNA ligase (634 aa).

Residues 1-61 (MINIRFPDGS…NSNCELRLIT (61 aa)) enclose the TGS domain. The interval 241 to 532 (DHRKIGKVLD…LIEHYAGNLP (292 aa)) is catalytic. Residues C332, H383, and H509 each contribute to the Zn(2+) site.

Belongs to the class-II aminoacyl-tRNA synthetase family. Homodimer. Zn(2+) is required as a cofactor.

Its subcellular location is the cytoplasm. The catalysed reaction is tRNA(Thr) + L-threonine + ATP = L-threonyl-tRNA(Thr) + AMP + diphosphate + H(+). Catalyzes the attachment of threonine to tRNA(Thr) in a two-step reaction: L-threonine is first activated by ATP to form Thr-AMP and then transferred to the acceptor end of tRNA(Thr). Also edits incorrectly charged L-seryl-tRNA(Thr). The chain is Threonine--tRNA ligase from Francisella tularensis subsp. mediasiatica (strain FSC147).